Here is a 344-residue protein sequence, read N- to C-terminus: tRNA N6-adenosine threonylcarbamoyltransferase (344 aa).

2 residues coordinate Fe cation: H114 and H118. Residues 136–140 (LVSGG), D170, G183, D187, and N278 each bind substrate. D306 is a Fe cation binding site. The segment at 325 to 344 (PSPLDVPSDPGLPVMQGQVR) is disordered.

The protein belongs to the KAE1 / TsaD family. Fe(2+) is required as a cofactor.

It is found in the cytoplasm. The enzyme catalyses L-threonylcarbamoyladenylate + adenosine(37) in tRNA = N(6)-L-threonylcarbamoyladenosine(37) in tRNA + AMP + H(+). In terms of biological role, required for the formation of a threonylcarbamoyl group on adenosine at position 37 (t(6)A37) in tRNAs that read codons beginning with adenine. Is involved in the transfer of the threonylcarbamoyl moiety of threonylcarbamoyl-AMP (TC-AMP) to the N6 group of A37, together with TsaE and TsaB. TsaD likely plays a direct catalytic role in this reaction. The sequence is that of tRNA N6-adenosine threonylcarbamoyltransferase from Mycobacterium tuberculosis (strain ATCC 25177 / H37Ra).